A 588-amino-acid polypeptide reads, in one-letter code: uncharacterized protein (588 aa).

A run of 7 helical transmembrane segments spans residues 14–34 (FLLFLPYFIGLLFLGFIKGIV), 49–69 (AVILSLLPVHIVWTFYSIVSA), 78–98 (IFLCLCLPAAIILWPIVGILG), 184–204 (ALVVSVLGILVDPPVISLVAI), 235–255 (VPIAGLAILLWPLAVTGAVIG), 257–274 (VISSIFLGAYAGVVSYQE), and 275–292 (SSFYYGLCYIVASVSIYD). Serine 486 is modified (phosphoserine). The interval 566–588 (RKGSVNGSDQESQKGVSRNVDIV) is disordered. Residues 570 to 581 (VNGSDQESQKGV) are compositionally biased toward polar residues.

The protein localises to the membrane. This is an uncharacterized protein from Arabidopsis thaliana (Mouse-ear cress).